A 184-amino-acid polypeptide reads, in one-letter code: NADH-quinone oxidoreductase subunit B (184 aa).

Residues Cys-63, Cys-64, Cys-128, and Cys-158 each coordinate [4Fe-4S] cluster.

This sequence belongs to the complex I 20 kDa subunit family. In terms of assembly, NDH-1 is composed of 14 different subunits. Subunits NuoB, C, D, E, F, and G constitute the peripheral sector of the complex. [4Fe-4S] cluster is required as a cofactor.

The protein resides in the cell inner membrane. The enzyme catalyses a quinone + NADH + 5 H(+)(in) = a quinol + NAD(+) + 4 H(+)(out). Its function is as follows. NDH-1 shuttles electrons from NADH, via FMN and iron-sulfur (Fe-S) centers, to quinones in the respiratory chain. The immediate electron acceptor for the enzyme in this species is believed to be ubiquinone. Couples the redox reaction to proton translocation (for every two electrons transferred, four hydrogen ions are translocated across the cytoplasmic membrane), and thus conserves the redox energy in a proton gradient. This chain is NADH-quinone oxidoreductase subunit B, found in Xanthomonas axonopodis pv. citri (strain 306).